Reading from the N-terminus, the 316-residue chain is Remorin 4.1 (316 aa).

3 disordered regions span residues 1 to 108, 125 to 202, and 267 to 287; these read MLSE…PSEL, NANA…SVGQ, and AQNE…SAEA. The segment covering 40–53 has biased composition (acidic residues); sequence EREEEVVVEEELEE. The segment covering 92–104 has biased composition (polar residues); the sequence is RHTSIRSVGSDTA. Residues 125–135 show a composition bias toward low complexity; the sequence is NANAAAAAAAN. Composition is skewed to basic and acidic residues over residues 143-153 and 277-287; these read GVDDALGRIGE and KAEEKRASAEA. Positions 242–288 form a coiled coil; it reads VEKANAWLKKYERKLEEKRAKAMEKAQNEVAKARRKAEEKRASAEAK.

Belongs to the remorin family. Interacts with BAK1. Phosphorylated by BRI1. Phosphorylation reduces the binding affinity to BAK1. As to expression, expressed in roots, leaf blades and leaf sheaths. Expressed at low levels in stems and spikelets.

It localises to the cell membrane. Functionally, functions in abscisic acid (ABA) signaling downstream of BZIP23. Acts as antagonistic and negative regulator of brassinosteroid (BR) signaling. Binds to BAK1 and inhibits its interaction with the BR receptor BRI1. Inhibits the formation and subsequent activation of the BRI1-BAK1 receptor complex. The protein is Remorin 4.1 of Oryza sativa subsp. japonica (Rice).